The following is a 411-amino-acid chain: Alpha-N-acetylgalactosaminidase (411 aa).

Positions 1–17 (MLLKTVLLLGHVAQVLM) are cleaved as a signal peptide. Disulfide bonds link cysteine 38-cysteine 80 and cysteine 42-cysteine 49. 78 to 79 (DD) contributes to the substrate binding site. A glycan (N-linked (GlcNAc...) asparagine) is linked at asparagine 124. A disulfide bridge connects residues cysteine 127 and cysteine 158. Lysine 154 is a binding site for substrate. The active-site Nucleophile is aspartate 156. N-linked (GlcNAc...) asparagine glycosylation occurs at asparagine 177. Cysteine 187 and cysteine 209 are oxidised to a cystine. Serine 188 serves as a coordination point for substrate. A glycan (N-linked (GlcNAc...) asparagine) is linked at asparagine 201. Arginine 213 and aspartate 217 together coordinate substrate. The Proton donor role is filled by aspartate 217. Phosphoserine is present on residues serine 322 and serine 332. Residues asparagine 359 and asparagine 385 are each glycosylated (N-linked (GlcNAc...) asparagine).

The protein belongs to the glycosyl hydrolase 27 family. As to quaternary structure, homodimer.

It localises to the lysosome. The enzyme catalyses Cleavage of non-reducing alpha-(1-&gt;3)-N-acetylgalactosamine residues from human blood group A and AB mucin glycoproteins, Forssman hapten and blood group A lacto series glycolipids.. The catalysed reaction is a neolactoside IV(3)-alpha-GalNAc,IV(2)-alpha-Fuc-nLc4Cer(d18:1(4E)) + H2O = a neolactoside IV(2)-alpha-Fuc-nLc4Cer(d18:1(4E)) + N-acetyl-alpha-D-galactosamine. It carries out the reaction a neolactoside IV(3)-alpha-GalNAc,IV(2)-alpha-Fuc-nLc4Cer(d18:0) + H2O = a neolactoside IV(2)-alpha-Fuc-nLc4Cer(d18:0) + N-acetyl-alpha-D-galactosamine. It catalyses the reaction a globoside IV3GalNAc-Gb4Cer + H2O = N-acetyl-alpha-D-galactosamine + a globoside Gb4Cer. Removes terminal alpha-N-acetylgalactosamine residues from glycolipids and glycopeptides. Required for the breakdown of glycolipids. This Homo sapiens (Human) protein is Alpha-N-acetylgalactosaminidase.